The chain runs to 164 residues: Microfibrillar-associated protein 5 (164 aa).

The signal sequence occupies residues 1–28 (MLFLGQKALLLVLAISIPSDWLPLGVSG). A Cell attachment site motif is present at residues 30 to 32 (RGD). N70 carries N-linked (GlcNAc...) asparagine glycosylation.

Belongs to the MFAP family. In terms of assembly, interacts with TGFB2. Interacts with BMP2. Interacts with FBN1 (via N-terminal domain) and FBN2. Post-translationally, forms intermolecular disulfide bonds either with other MAGP-2 molecules or with other components of the microfibrils.

Its subcellular location is the secreted. The protein resides in the extracellular space. The protein localises to the extracellular matrix. May play a role in hematopoiesis. In the cardiovascular system, could regulate growth factors or participate in cell signaling in maintaining large vessel integrity. Component of the elastin-associated microfibrils. The sequence is that of Microfibrillar-associated protein 5 (Mfap5) from Mus musculus (Mouse).